We begin with the raw amino-acid sequence, 266 residues long: Arcelin-4 (266 aa).

Positions 1 to 21 are cleaved as a signal peptide; the sequence is MGSSKLLSLALLLVLLTHANS. N-linked (GlcNAc...) asparagine glycans are attached at residues N28 and N92.

This sequence belongs to the leguminous lectin family.

In terms of biological role, seed storage. This carbohydrate-binding lectin has toxic effects on the important bean bruchid pests, Z.subfasciatus and A.obtectus. The sequence is that of Arcelin-4 (ARC4) from Phaseolus vulgaris (Kidney bean).